Here is a 552-residue protein sequence, read N- to C-terminus: Elongator complex protein 3 (552 aa).

The Radical SAM core domain occupies 84-374 (RTASGIAVVA…YRVQRDIPMP (291 aa)). 3 residues coordinate [4Fe-4S] cluster: Cys101, Cys111, and Cys114. Acetyl-CoA-binding positions include Lys166, 476-479 (ELHV), 499-501 (FGM), and Tyr532. In terms of domain architecture, N-acetyltransferase spans 398-552 (TTCRDVRTRE…YMSKSIEENN (155 aa)).

This sequence belongs to the ELP3 family. As to quaternary structure, component of the elongator complex composed of Elp1, Elp2, Elp3, Elp4, Elp5 and Elp6. The elongator complex associates with and stabilizes microtubules; efficient interaction requires the full complex. Requires [4Fe-4S] cluster as cofactor.

It localises to the cytoplasm. Its subcellular location is the nucleus. It is found in the cytoskeleton. The protein localises to the spindle. It carries out the reaction uridine(34) in tRNA + acetyl-CoA + S-adenosyl-L-methionine + H2O = 5-(carboxymethyl)uridine(34) in tRNA + 5'-deoxyadenosine + L-methionine + CoA + 2 H(+). Its pathway is tRNA modification; 5-methoxycarbonylmethyl-2-thiouridine-tRNA biosynthesis. In terms of biological role, catalytic tRNA acetyltransferase subunit of the elongator complex, which is required for multiple tRNA modifications, including mcm5U (5-methoxycarbonylmethyl uridine), mcm5s2U (5-methoxycarbonylmethyl-2-thiouridine), and ncm5U (5-carbamoylmethyl uridine). In the elongator complex, acts as a tRNA uridine(34) acetyltransferase by mediating formation of carboxymethyluridine in the wobble base at position 34 in tRNAs. Binding by the elongator complex stabilizes microtubules and promotes their growth. This induces central spindle asymmetry, promoting polarized signaling endosome trafficking during asymmetric cell division and cell fate assignation of sensory organ precursor cells. Plays a role in the control of synaptic bouton expansion. Required for larval development. Involved in protein synthesis-dependent long-term memory formation, probably as part of the elongator complex. The chain is Elongator complex protein 3 from Drosophila melanogaster (Fruit fly).